A 229-amino-acid polypeptide reads, in one-letter code: Deoxyribose-phosphate aldolase (229 aa).

Aspartate 96 (proton donor/acceptor) is an active-site residue. Residue lysine 166 is the Schiff-base intermediate with acetaldehyde of the active site. Lysine 195 serves as the catalytic Proton donor/acceptor.

It belongs to the DeoC/FbaB aldolase family. DeoC type 1 subfamily.

The protein resides in the cytoplasm. It catalyses the reaction 2-deoxy-D-ribose 5-phosphate = D-glyceraldehyde 3-phosphate + acetaldehyde. The protein operates within carbohydrate degradation; 2-deoxy-D-ribose 1-phosphate degradation; D-glyceraldehyde 3-phosphate and acetaldehyde from 2-deoxy-alpha-D-ribose 1-phosphate: step 2/2. Catalyzes a reversible aldol reaction between acetaldehyde and D-glyceraldehyde 3-phosphate to generate 2-deoxy-D-ribose 5-phosphate. The chain is Deoxyribose-phosphate aldolase from Micrococcus luteus (strain ATCC 4698 / DSM 20030 / JCM 1464 / CCM 169 / CCUG 5858 / IAM 1056 / NBRC 3333 / NCIMB 9278 / NCTC 2665 / VKM Ac-2230) (Micrococcus lysodeikticus).